We begin with the raw amino-acid sequence, 744 residues long: Polyribonucleotide nucleotidyltransferase (744 aa).

2 residues coordinate Mg(2+): aspartate 515 and aspartate 521. In terms of domain architecture, KH spans 581 to 640 (PRVITVQVPVDKIGEVIGPKGKMINQIQDDTGADISIEDDGTVFIGATDGPSAEAARQAI). Residues 652–724 (GERFVGTVVK…PRGKLSLHAV (73 aa)) form the S1 motif domain.

The protein belongs to the polyribonucleotide nucleotidyltransferase family. It depends on Mg(2+) as a cofactor.

The protein resides in the cytoplasm. It carries out the reaction RNA(n+1) + phosphate = RNA(n) + a ribonucleoside 5'-diphosphate. Involved in mRNA degradation. Catalyzes the phosphorolysis of single-stranded polyribonucleotides processively in the 3'- to 5'-direction. The sequence is that of Polyribonucleotide nucleotidyltransferase from Beutenbergia cavernae (strain ATCC BAA-8 / DSM 12333 / CCUG 43141 / JCM 11478 / NBRC 16432 / NCIMB 13614 / HKI 0122).